Here is a 341-residue protein sequence, read N- to C-terminus: Glyceraldehyde-3-phosphate dehydrogenase 2 (341 aa).

NAD(+) is bound by residues 12-13 (RI), Arg-78, and Thr-120. D-glyceraldehyde 3-phosphate contacts are provided by residues 152-154 (SCT) and Thr-183. Cys-153 serves as the catalytic Nucleophile. Asn-184 lines the NAD(+) pocket. Residues Arg-198, 211 to 212 (TG), and Arg-234 each bind D-glyceraldehyde 3-phosphate. Position 313 (Asn-313) interacts with NAD(+).

This sequence belongs to the glyceraldehyde-3-phosphate dehydrogenase family. Homotetramer.

It is found in the cytoplasm. It carries out the reaction D-glyceraldehyde 3-phosphate + phosphate + NAD(+) = (2R)-3-phospho-glyceroyl phosphate + NADH + H(+). It participates in carbohydrate degradation; glycolysis; pyruvate from D-glyceraldehyde 3-phosphate: step 1/5. Its function is as follows. Catalyzes the oxidative phosphorylation of glyceraldehyde 3-phosphate (G3P) to 1,3-bisphosphoglycerate (BPG) using the cofactor NAD. The first reaction step involves the formation of a hemiacetal intermediate between G3P and a cysteine residue, and this hemiacetal intermediate is then oxidized to a thioester, with concomitant reduction of NAD to NADH. The reduced NADH is then exchanged with the second NAD, and the thioester is attacked by a nucleophilic inorganic phosphate to produce BPG. In Staphylococcus epidermidis (strain ATCC 12228 / FDA PCI 1200), this protein is Glyceraldehyde-3-phosphate dehydrogenase 2 (gapA2).